The primary structure comprises 956 residues: Golgin candidate 5 (956 aa).

Disordered regions lie at residues 70-230 (MSFM…QHKI) and 278-298 (IFESDGSPYESSIPKRSSSDE). Composition is skewed to basic and acidic residues over residues 77-89 (SDEKPDTLEDSVR) and 118-129 (ANKETNVRREAD). Polar residues-rich tracts occupy residues 160–177 (EYSLQTPESSGYKTSLQP) and 184–193 (TASQDSQPEQ). The segment covering 206-219 (SEAKEVTVENKDTV) has biased composition (basic and acidic residues). The stretch at 333–765 (SDSADVILEL…LIQKDLEREK (433 aa)) forms a coiled coil. Serine 793 bears the Phosphoserine mark. Residues 851 to 951 (SAYEATLRQK…EMYREQVNML (101 aa)) are a coiled coil.

In terms of assembly, interacts with RABH1B and RABH1C, but not with RABD1 or RABD2A.

Its subcellular location is the golgi apparatus. It localises to the cytoplasm. Functionally, golgi matrix protein playing a role in tethering of vesicles to Golgi membranes and in maintaining the overall structure of the Golgi apparatus. This is Golgin candidate 5 (GC5) from Arabidopsis thaliana (Mouse-ear cress).